The primary structure comprises 94 residues: CRISPR-associated endoribonuclease Cas2 (94 aa).

A Mg(2+)-binding site is contributed by Asp10.

Belongs to the CRISPR-associated endoribonuclease Cas2 protein family. As to quaternary structure, homodimer, forms a heterotetramer with a Cas1 homodimer. It depends on Mg(2+) as a cofactor.

CRISPR (clustered regularly interspaced short palindromic repeat), is an adaptive immune system that provides protection against mobile genetic elements (viruses, transposable elements and conjugative plasmids). CRISPR clusters contain sequences complementary to antecedent mobile elements and target invading nucleic acids. CRISPR clusters are transcribed and processed into CRISPR RNA (crRNA). Functions as a ssRNA-specific endoribonuclease. Involved in the integration of spacer DNA into the CRISPR cassette. This is CRISPR-associated endoribonuclease Cas2 from Leptospira interrogans serogroup Icterohaemorrhagiae serovar Lai (strain 56601).